The primary structure comprises 872 residues: MKTMTSAEVRQMFLDFFKSKGHTVEPSQSLVPVNDPTLLWINSGVATLKKYFDGSVVPENPRLTNAQKAIRTNDIENVGKTARHHTMFEMLGNFSIGDYFRNEAIAFAWELLTSSEWFEFPAEKLYITYYPADKDTYNRWVEVGVDPTHLVPIEDNFWEIGAGPSGPDTEIFFDRGEIYDPEHVGLKLLAEDIENDRYIEIWNIVLSQFNANPAIPRSEYPELPQKNIDTGMGLERMVCIIQGGKTNFDTDLFLPIIREIEKLSGKTYSPDSENMSFKVIADHIRSLSFAIGDGALPGNEGRGYVLRRLLRRAVMHGKKLGIQGKFLASLVPTVGKIMQSYYPEVLEKEDFIMQIIDREEETFNRTIDAGQKLIDELLVNLKAEGKDRIEGADIFRLYDTYGFPVELTEELAEDEGFKIEHEGFKVAMKAQQDRARAAVVKGGSMGAQNETLSSIEVDSKFLYEDKKAQAKLLVAIKDDELVDEVTGKAQLVFDVTPFYAEMGGQVADHGVIKNADGQVVATVLDVQHAPHGQNLHSVETISPLKVGETYTLEIDEERRSAVVKNHTATHLLHAALHNIVGNHALQAGSLNEVEFLRFDFTHFAQVSKEELAEIERQVNEVIWQSLKVETIETYIATAKEMGAMALFGEKYGKNVRVVKIGDYSIELCGGTHTQTTSEIGLFKIIKEEGIGSGVRRIIAVTGQKAYEAFKDAENTLSEVAGLVKAPQASQIVAKVSNLQDELKAAQKENDALAGKLAASQSDEIFKNVQRAGSVSFIASQVTVPDAKGLRNLADIWKQKELSDILVLVATIGEKVSLLVASKSLDVKAGNLVKELAPFVDGRGGGKPDMAMAGGSNAAGIPELLTAVAEKLG.

4 residues coordinate Zn(2+): H566, H570, C668, and H672.

Belongs to the class-II aminoacyl-tRNA synthetase family. Zn(2+) is required as a cofactor.

It localises to the cytoplasm. The catalysed reaction is tRNA(Ala) + L-alanine + ATP = L-alanyl-tRNA(Ala) + AMP + diphosphate. Its function is as follows. Catalyzes the attachment of alanine to tRNA(Ala) in a two-step reaction: alanine is first activated by ATP to form Ala-AMP and then transferred to the acceptor end of tRNA(Ala). Also edits incorrectly charged Ser-tRNA(Ala) and Gly-tRNA(Ala) via its editing domain. This chain is Alanine--tRNA ligase, found in Lactococcus lactis subsp. cremoris (strain MG1363).